A 775-amino-acid polypeptide reads, in one-letter code: Cation channel sperm-associated protein subunit epsilon-like protein (775 aa).

An N-terminal signal peptide occupies residues 1 to 20 (MLARRVVAALLLWLSCCVSA). 2 N-linked (GlcNAc...) asparagine glycosylation sites follow: asparagine 62 and asparagine 114.

Belongs to the CATSPERD family.

The protein is Cation channel sperm-associated protein subunit epsilon-like protein of Mus musculus (Mouse).